The following is a 782-amino-acid chain: Polyribonucleotide nucleotidyltransferase (782 aa).

Mg(2+) contacts are provided by aspartate 514 and aspartate 520. A KH domain is found at 580-639 (PRIITIKIPVDQIGAVIGPKGKIINQIQDDTGAEITIEDDGTIYIGATEGTAAEAARAAI). One can recognise an S1 motif domain in the interval 651–723 (GERYLGTVVK…ARGKLSLVPV (73 aa)). The segment covering 734–753 (AGAGESAASGGAPRSAGGPQ) has biased composition (low complexity). A disordered region spans residues 734-782 (AGAGESAASGGAPRSAGGPQPREHQGPGRPRGRGGDHGGEGRQRTRRRH). Basic and acidic residues predominate over residues 766–776 (RGGDHGGEGRQ).

It belongs to the polyribonucleotide nucleotidyltransferase family. It depends on Mg(2+) as a cofactor.

The protein resides in the cytoplasm. It carries out the reaction RNA(n+1) + phosphate = RNA(n) + a ribonucleoside 5'-diphosphate. Its function is as follows. Involved in mRNA degradation. Catalyzes the phosphorolysis of single-stranded polyribonucleotides processively in the 3'- to 5'-direction. This chain is Polyribonucleotide nucleotidyltransferase, found in Acidothermus cellulolyticus (strain ATCC 43068 / DSM 8971 / 11B).